The sequence spans 151 residues: MTESTTSDVVLTSEQIAGLLPHRYPFALVDRVIAHDPGVSATAIKNVTMNEPQFQGHFPERPLMPGVLIVEAMAQVGGLIVTQMPDLPKGLFVFAGIDGVRFRRPVVPGDQLVIRCELLSLKRKRFGKVKAEATVDGDLACSGELMFSLVD.

H57 is an active-site residue.

It belongs to the thioester dehydratase family. FabZ subfamily.

It localises to the cytoplasm. The catalysed reaction is a (3R)-hydroxyacyl-[ACP] = a (2E)-enoyl-[ACP] + H2O. In terms of biological role, involved in unsaturated fatty acids biosynthesis. Catalyzes the dehydration of short chain beta-hydroxyacyl-ACPs and long chain saturated and unsaturated beta-hydroxyacyl-ACPs. The polypeptide is 3-hydroxyacyl-[acyl-carrier-protein] dehydratase FabZ (Synechococcus sp. (strain CC9605)).